Consider the following 509-residue polypeptide: Cytochrome P450 4X1 (509 aa).

The chain crosses the membrane as a helical span at residues 14–34; that stretch reads FYLAFVFCLALGLLQAIKLYL. Cysteine 454 is a binding site for heme.

Belongs to the cytochrome P450 family. The cofactor is heme. As to expression, expressed in brain, heart, kidney and skin and, at lower levels, in skeletal muscle and liver. In the brain, high levels are detected in amygdala and lower levels in globus pallidus and cerebellum. In the heart, very high levels in aorta, but very low levels in other heart regions. Also expressed in breast, prostate and colon.

The protein localises to the endoplasmic reticulum membrane. The protein resides in the microsome membrane. The catalysed reaction is N-(5Z,8Z,11Z,14Z-eicosatetraenoyl)-ethanolamine + reduced [NADPH--hemoprotein reductase] + O2 = N-(14,15-epoxy-5Z,8Z,11Z-eicosatrienoyl)-ethanolamine + oxidized [NADPH--hemoprotein reductase] + H2O + H(+). Functionally, a cytochrome P450 monooxygenase that selectively catalyzes the epoxidation of the last double bond of the arachidonoyl moiety of anandamide, potentially modulating endocannabinoid signaling. Has no hydroxylase activity toward various fatty acids, steroids and prostaglandins. Mechanistically, uses molecular oxygen inserting one oxygen atom into a substrate, and reducing the second into a water molecule, with two electrons provided by NADPH via cytochrome P450 reductase (CPR; NADPH-ferrihemoprotein reductase). The polypeptide is Cytochrome P450 4X1 (Homo sapiens (Human)).